Here is a 214-residue protein sequence, read N- to C-terminus: GTP-binding nuclear protein Ran (214 aa).

Positions 6-170 (YIPQYKLILV…LWLARRLSNQ (165 aa)) constitute a Small GTPase Ran-type domain. Position 17-24 (17-24 (DGGVGKTT)) interacts with GTP. The interval 36-44 (KKYIPTLGV) is switch-I. Residues glycine 67, 121-124 (NKVD), and 149-151 (SAR) contribute to the GTP site. Residues 67 to 83 (GQEKFGGLRDGYYIKSD) form a switch-II region.

Belongs to the small GTPase superfamily. Ran family. In terms of assembly, found in a nuclear export complex with RanGTP, exportin and pre-miRNA.

It localises to the nucleus. GTP-binding protein involved in nucleocytoplasmic transport. Required for the import of protein into the nucleus and also for RNA export. Involved in chromatin condensation and control of cell cycle. The protein is GTP-binding nuclear protein Ran of Plasmodium falciparum.